The primary structure comprises 589 residues: ATP-dependent lipid A-core flippase (589 aa).

6 helical membrane-spanning segments follow: residues 37–57, 72–92, 151–171, 173–193, 260–280, and 286–306; these read ALAIGATIVASATEPFVPALL, LWLVPLALMLLFTVRGLSGFL, IMKLARDVLTLLALIGYLVYL, WKLMLVVALLFPAVAFVIQVL, SAITQVLAAMALSAVISIALL, and TTTVGGFVAFVTAMLLLIAPV. The region spanning 37–318 is the ABC transmembrane type-1 domain; the sequence is ALAIGATIVA…LSDAATPVTR (282 aa). Residues 350 to 584 enclose the ABC transporter domain; the sequence is IEFADVSVIY…NGAYAHLYRL (235 aa). 384–391 lines the ATP pocket; the sequence is GASGSGKT.

Belongs to the ABC transporter superfamily. Lipid exporter (TC 3.A.1.106) family. In terms of assembly, homodimer.

It localises to the cell inner membrane. The enzyme catalyses ATP + H2O + lipid A-core oligosaccharideSide 1 = ADP + phosphate + lipid A-core oligosaccharideSide 2.. Its function is as follows. Involved in lipopolysaccharide (LPS) biosynthesis. Translocates lipid A-core from the inner to the outer leaflet of the inner membrane. Transmembrane domains (TMD) form a pore in the inner membrane and the ATP-binding domain (NBD) is responsible for energy generation. The protein is ATP-dependent lipid A-core flippase of Polaromonas sp. (strain JS666 / ATCC BAA-500).